We begin with the raw amino-acid sequence, 385 residues long: GTPase Obg (385 aa).

In terms of domain architecture, Obg spans 1–159; it reads MHFIDQAEIE…RRLRLELKLI (159 aa). The OBG-type G domain maps to 160–328; that stretch reads AEVGIVGMPN…LLQRVWQCLG (169 aa). Residues 166–173, 191–195, 213–216, 280–283, and 309–311 contribute to the GTP site; these read GMPNAGKS, FTTLQ, DIPG, NKID, and SAV. Residues Ser-173 and Thr-193 each contribute to the Mg(2+) site.

The protein belongs to the TRAFAC class OBG-HflX-like GTPase superfamily. OBG GTPase family. As to quaternary structure, monomer. Mg(2+) is required as a cofactor.

It localises to the cytoplasm. Its function is as follows. An essential GTPase which binds GTP, GDP and possibly (p)ppGpp with moderate affinity, with high nucleotide exchange rates and a fairly low GTP hydrolysis rate. Plays a role in control of the cell cycle, stress response, ribosome biogenesis and in those bacteria that undergo differentiation, in morphogenesis control. The chain is GTPase Obg from Synechococcus sp. (strain JA-3-3Ab) (Cyanobacteria bacterium Yellowstone A-Prime).